Consider the following 443-residue polypeptide: Probable lipase C16A3.12c (443 aa).

The Cytoplasmic segment spans residues 1–16 (MSGFNKNQIYWGDYVG). Residues 17-37 (VIAAFVGVYTELVARIFIYMI) form a helical; Signal-anchor for type II membrane protein membrane-spanning segment. Topologically, residues 38–443 (PERVREWFRV…KHFVKQNGFH (406 aa)) are lumenal. Residues 116–410 (VVYCHHGLMT…HYEHLDFLWG (295 aa)) form the AB hydrolase-1 domain. N-linked (GlcNAc...) asparagine glycans are attached at residues N134 and N177. Catalysis depends on S210, which acts as the Nucleophile. Residues N304 and N335 are each glycosylated (N-linked (GlcNAc...) asparagine). Active-site charge relay system residues include D378 and H404.

This sequence belongs to the AB hydrolase superfamily. Lipase family.

The protein resides in the cytoplasm. It is found in the vacuole. The protein localises to the membrane. Probable lipase. The protein is Probable lipase C16A3.12c of Schizosaccharomyces pombe (strain 972 / ATCC 24843) (Fission yeast).